The chain runs to 107 residues: Small ribosomal subunit protein uS17 (107 aa).

Belongs to the universal ribosomal protein uS17 family. As to quaternary structure, part of the 30S ribosomal subunit.

In terms of biological role, one of the primary rRNA binding proteins, it binds specifically to the 5'-end of 16S ribosomal RNA. The protein is Small ribosomal subunit protein uS17 of Thermotoga sp. (strain RQ2).